The following is a 508-amino-acid chain: Tryptamine 4-monooxygenase (508 aa).

The N-terminal stretch at 1 to 19 is a signal peptide; the sequence is MIAVLFSFVIAGCIYYIVS. Heme is bound at residue Cys-439.

Belongs to the cytochrome P450 family. The cofactor is heme.

The enzyme catalyses tryptamine + AH2 + O2 = 4-hydroxytryptamine + A + H2O. It functions in the pathway secondary metabolite biosynthesis. Its function is as follows. Cytochrome P450 monooxygenase; part of the gene cluster that mediates the biosynthesis of psilocybin, a psychotropic tryptamine-derived natural product. The first step in the pathway is the decarboxylation of L-tryptophan to tryptamine by the decarboxylase psiD. 4-hydroxy-L-tryptophan is accepted as substrate by psiD as well. The cytochrome P450 monooxygenase psiH then converts tryptamine to 4-hydroxytryptamine. The kinase psiK catalyzes the 4-O-phosphorylation step by converting 4-hydroxytryptamine into norbaeocystin. The methyltransferase psiM then catalyzes iterative methyl transfer to the amino group of norbaeocystin to yield psilocybin via a monomethylated intermediate, baeocystin. The protein is Tryptamine 4-monooxygenase of Psilocybe cubensis (Psychedelic mushroom).